Consider the following 153-residue polypeptide: MAPKKAAKGDEAPKEVVSLGPTVREGEHVFGVAHIFASFNDTFVHVTDLSGRETISRVTGGMKVKADRDESSPYAAMLAAQDVAQKCKELGITALHIKLRATGGNRTKTPGPGAQSALRALARAGMKIGRIEDVTPIPTDSTRRKGGRRGRRL.

The protein belongs to the universal ribosomal protein uS11 family.

This Chlamydomonas reinhardtii (Chlamydomonas smithii) protein is Small ribosomal subunit protein uS11 (RPS14).